A 327-amino-acid chain; its full sequence is tRNA uridine(34) hydroxylase (327 aa).

The Rhodanese domain maps to 130–224; it reads LDEDTVVLDT…YGKDPEVQGE (95 aa). The active-site Cysteine persulfide intermediate is the Cys184.

This sequence belongs to the TrhO family.

It carries out the reaction uridine(34) in tRNA + AH2 + O2 = 5-hydroxyuridine(34) in tRNA + A + H2O. Functionally, catalyzes oxygen-dependent 5-hydroxyuridine (ho5U) modification at position 34 in tRNAs. The chain is tRNA uridine(34) hydroxylase from Streptococcus thermophilus (strain CNRZ 1066).